Consider the following 802-residue polypeptide: Phenylalanine--tRNA ligase beta subunit (802 aa).

A tRNA-binding domain is found at 40 to 155 (SASLKNVVVG…AHVETGVNAI (116 aa)). The B5 domain maps to 409–484 (KAVNKIETSL…RIYGYDEIPV (76 aa)). 4 residues coordinate Mg(2+): aspartate 462, aspartate 468, glutamate 471, and glutamate 472. Residues 709–802 (PRYPEMTRDL…LQEKLNAIIR (94 aa)) form the FDX-ACB domain.

This sequence belongs to the phenylalanyl-tRNA synthetase beta subunit family. Type 1 subfamily. As to quaternary structure, tetramer of two alpha and two beta subunits. Requires Mg(2+) as cofactor.

Its subcellular location is the cytoplasm. It catalyses the reaction tRNA(Phe) + L-phenylalanine + ATP = L-phenylalanyl-tRNA(Phe) + AMP + diphosphate + H(+). This is Phenylalanine--tRNA ligase beta subunit from Listeria monocytogenes serovar 1/2a (strain ATCC BAA-679 / EGD-e).